A 2754-amino-acid chain; its full sequence is Neurobeachin-like protein 2 (2754 aa).

2 disordered regions span residues 1298–1338 (TAGS…SEAP) and 1364–1438 (SVGS…QQTS). Composition is skewed to pro residues over residues 1301-1323 (SPPPSSPESPTSPKPAPPKPPTE) and 1388-1400 (TPSPLDGPRPFPA). The span at 1425 to 1437 (GDDTSNTSNPQQT) shows a compositional bias: polar residues. Position 1647 is a phosphoserine (Ser-1647). Thr-1867 is modified (phosphothreonine). The BEACH-type PH domain maps to 1915-2040 (EQREKLVLSA…VRNQVYSWLL (126 aa)). In terms of domain architecture, BEACH spans 2053–2345 (RSPQEMLRAS…QLLKEPHPTR (293 aa)). WD repeat units follow at residues 2386–2424 (LVLALVPHRQPHSFITQGSPDLLVTVSASGLLGTHSWLP), 2448–2491 (RLLS…ALPR), 2494–2531 (LLSQLSCHLDVVTCLALDTCGIYLISGSRDTTCMVWRL), 2544–2582 (KPVQVLYGHGAAVSCVAISTELDMAVSGSEDGTVIIHTV), 2589–2631 (AALR…TYSL), 2639–2674 (KLRASLPLAEQPTALTVTEDFVLLGTAQCALHILQL), and 2682–2717 (PPLPMKVAIRSVAVTKERSHVLVGLEDGKLIVVVAG). 2 positions are modified to phosphoserine: Ser-2739 and Ser-2742.

Belongs to the WD repeat neurobeachin family. In terms of tissue distribution, expressed in megakaryocytes.

The protein localises to the endoplasmic reticulum. Its function is as follows. Probably involved in thrombopoiesis. Plays a role in the development or secretion of alpha-granules, that contain several growth factors important for platelet biogenesis. In Homo sapiens (Human), this protein is Neurobeachin-like protein 2 (NBEAL2).